The sequence spans 406 residues: uncharacterized protein (406 aa).

The N-myristoyl glycine; by host moiety is linked to residue glycine 2. Positions 291 to 406 (QLESTTEVKP…FQYNKPTYDI (116 aa)) are disordered. Over residues 296 to 310 (TEVKPESTTEVKPES) the composition is skewed to basic and acidic residues. Positions 311 to 323 (TSEVQPESTTEFQ) are enriched in polar residues. Low complexity-rich tracts occupy residues 324-333 (PESTTVVEPE), 341-351 (ESTTEFQPEST), and 359-369 (TTEPQVESTTE). Residues 370–406 (FQPESSTEPQVESTVEVQAESMNESSYFQYNKPTYDI) are compositionally biased toward polar residues.

This is an uncharacterized protein from Acanthamoeba polyphaga (Amoeba).